Here is a 252-residue protein sequence, read N- to C-terminus: Trans-aconitate 2-methyltransferase (252 aa).

Belongs to the methyltransferase superfamily. Tam family.

The protein localises to the cytoplasm. The enzyme catalyses trans-aconitate + S-adenosyl-L-methionine = (E)-3-(methoxycarbonyl)pent-2-enedioate + S-adenosyl-L-homocysteine. Functionally, catalyzes the S-adenosylmethionine monomethyl esterification of trans-aconitate. The sequence is that of Trans-aconitate 2-methyltransferase from Escherichia coli O6:H1 (strain CFT073 / ATCC 700928 / UPEC).